The chain runs to 1388 residues: Peroxisomal ATPase PEX6 (1388 aa).

5 disordered regions span residues 1–29, 169–192, 262–287, 302–323, and 346–365; these read MTTS…PALS, EGTF…DTPE, RGQS…DDTA, DAAT…SGVD, and TTAS…IGRG. Positions 14-23 are enriched in basic residues; that stretch reads RSPRTRRRRQ. The segment covering 169 to 178 has biased composition (basic and acidic residues); the sequence is EGTFFRDRPN. The span at 310-323 shows a compositional bias: acidic residues; that stretch reads TVTETEESDLSGVD. The span at 346–358 shows a compositional bias: polar residues; the sequence is TTASGVSTMQPGT. ATP is bound at residue 1034–1041; it reads GPPGTGKT. A disordered region spans residues 1297–1388; that stretch reads GPPEKDRQQQ…GTASDDEGLY (92 aa). A compositionally biased stretch (low complexity) spans 1319 to 1332; sequence VSGSSVVSKGKGKA.

The protein belongs to the AAA ATPase family. In terms of assembly, interacts with PEX1; forming the PEX1-PEX6 AAA ATPase complex, which is composed of a heterohexamer formed by a trimer of PEX1-PEX6 dimers.

The protein resides in the cytoplasm. It is found in the cytosol. It localises to the peroxisome membrane. It carries out the reaction ATP + H2O = ADP + phosphate + H(+). In terms of biological role, component of the PEX1-PEX6 AAA ATPase complex, a protein dislocase complex that mediates the ATP-dependent extraction of the PEX5 receptor from peroxisomal membranes, an essential step for PEX5 recycling. Specifically recognizes PEX5 monoubiquitinated at 'Cys-6', and pulls it out of the peroxisome lumen through the PEX2-PEX10-PEX12 retrotranslocation channel. Extraction by the PEX1-PEX6 AAA ATPase complex is accompanied by unfolding of the TPR repeats and release of bound cargo from PEX5. This chain is Peroxisomal ATPase PEX6 (PEX6), found in Colletotrichum orbiculare (strain 104-T / ATCC 96160 / CBS 514.97 / LARS 414 / MAFF 240422) (Cucumber anthracnose fungus).